We begin with the raw amino-acid sequence, 127 residues long: Large-conductance mechanosensitive channel (127 aa).

The next 2 helical transmembrane spans lie at 14-34 (VLDLAVGVIIGGAFTGLVKSL) and 69-89 (GAFLNDVINFLITAFVVFLIV).

The protein belongs to the MscL family. As to quaternary structure, homopentamer.

It localises to the cell membrane. Functionally, channel that opens in response to stretch forces in the membrane lipid bilayer. May participate in the regulation of osmotic pressure changes within the cell. The chain is Large-conductance mechanosensitive channel from Leuconostoc mesenteroides subsp. mesenteroides (strain ATCC 8293 / DSM 20343 / BCRC 11652 / CCM 1803 / JCM 6124 / NCDO 523 / NBRC 100496 / NCIMB 8023 / NCTC 12954 / NRRL B-1118 / 37Y).